The following is a 74-amino-acid chain: ATP synthase subunit 9, mitochondrial (74 aa).

The next 2 membrane-spanning stretches (helical) occupy residues 16 to 36 (GLIG…LGVA) and 50 to 70 (ILGF…AFLL).

Belongs to the ATPase C chain family. In terms of assembly, F-type ATPases have 2 components, CF(1) - the catalytic core - and CF(0) - the membrane proton channel. CF(1) has five subunits: alpha(3), beta(3), gamma(1), delta(1), epsilon(1). CF(0) has three main subunits: a, b and c.

The protein resides in the mitochondrion membrane. In terms of biological role, mitochondrial membrane ATP synthase (F(1)F(0) ATP synthase or Complex V) produces ATP from ADP in the presence of a proton gradient across the membrane which is generated by electron transport complexes of the respiratory chain. F-type ATPases consist of two structural domains, F(1) - containing the extramembraneous catalytic core and F(0) - containing the membrane proton channel, linked together by a central stalk and a peripheral stalk. During catalysis, ATP synthesis in the catalytic domain of F(1) is coupled via a rotary mechanism of the central stalk subunits to proton translocation. Part of the complex F(0) domain. A homomeric c-ring of probably 10 subunits is part of the complex rotary element. The sequence is that of ATP synthase subunit 9, mitochondrial (ATP9) from Trichophyton rubrum (Athlete's foot fungus).